Reading from the N-terminus, the 478-residue chain is Oxidative stress-induced growth inhibitor 1 (478 aa).

Position 12 is a phosphoserine (serine 12).

The protein belongs to the OKL38 family. The cofactor is NADPH.

It is found in the midbody. Monooxygenase catalytic activity. Involved in regulation of cytokinesis; promotes RHOA activity, probably acting locally at the midbody in late cytokinesis. Monooxygenase activity is involved in stabilizing transient structures between daughter cells, termed intercellular bridges, before abscission. Regulates differentiation and proliferation through the regulation of cell death. The sequence is that of Oxidative stress-induced growth inhibitor 1 from Mus musculus (Mouse).